A 201-amino-acid polypeptide reads, in one-letter code: Eukaryotic translation initiation factor 4E-5 (201 aa).

Cys-122 and Cys-126 are oxidised to a cystine.

It belongs to the eukaryotic initiation factor 4E family. As to quaternary structure, eIF4F is a multi-subunit complex, the composition of which varies with external and internal environmental conditions. It is composed of at least eIF4A, eIF4E and eIF4G. eIF4E is also known to interact with other partners. In terms of tissue distribution, enriched in the germline.

In terms of biological role, recognizes and binds the 7-methylguanosine-containing mRNA cap during an early step in the initiation of protein synthesis and facilitates ribosome binding by inducing the unwinding of the mRNAs secondary structures. All 5 eIF4E proteins bind monomethyl cap structures. Only ife-1, ife-2 and ife-5 bind trimethyl cap structures which result from trans-splicing. Translation of trimethyl cap structure mRNAs may be regulated by intracellular redox state; disulfide bonds change the width and depth of the cap-binding cavity determining selectivity to mRNA caps. The chain is Eukaryotic translation initiation factor 4E-5 (ife-5) from Caenorhabditis elegans.